Here is a 1235-residue protein sequence, read N- to C-terminus: Chitin synthase 4 (1235 aa).

The segment covering 1–11 (MSLPRRPGPSP) has biased composition (pro residues). A disordered region spans residues 1-203 (MSLPRRPGPS…ASKGKREKSG (203 aa)). Residues 1–212 (MSLPRRPGPS…GGLPTPSFWN (212 aa)) lie on the Cytoplasmic side of the membrane. Positions 19–28 (YRQSGSRRSR) are enriched in basic residues. The span at 46-59 (PSQQQRVPSISSFP) shows a compositional bias: polar residues. Positions 94-107 (IRPERNRIGKDHPN) are enriched in basic and acidic residues. Residues 116–125 (NMNTLPSSTG) show a composition bias toward polar residues. The span at 169 to 187 (ETEKSGDERRRRRKSDTTK) shows a compositional bias: basic and acidic residues. Basic residues predominate over residues 188–199 (HGKIVKASKGKR). A helical membrane pass occupies residues 213–233 (IYCGFVTFWCPGFVLKCFGMP). At 234-244 (EMAQQRAWREK) the chain is on the extracellular side. The chain crosses the membrane as a helical span at residues 245–265 (MGLISIILLIMGFVGFITFGF). The Cytoplasmic segment spans residues 266 to 514 (TQVVCGKPPL…ASKVVLYVSL (249 aa)). A helical membrane pass occupies residues 515 to 535 (VLILAVVLARFVLALIFQWFI). The Extracellular segment spans residues 536–1065 (SKTYAAAKTS…SMQFIVGIEL (530 aa)). The interval 545–592 (SQTSDQRKRNRQIEDWTEDIYRAPPRLPGEVGSSVAGSSDRQSKRSSA) is disordered. Residues 549–558 (DQRKRNRQIE) show a composition bias toward basic and acidic residues. Asn639 carries N-linked (GlcNAc...) asparagine glycosylation. Residues 645-670 (FLKSDAYGSSSSPADGPGPAGFIHEA) are disordered. Low complexity predominate over residues 648–665 (SDAYGSSSSPADGPGPAG). Asn1034 carries N-linked (GlcNAc...) asparagine glycosylation. A helical membrane pass occupies residues 1066–1086 (IGTLVLPAAIAFTFYVVIISI). The Cytoplasmic portion of the chain corresponds to 1087–1092 (INSPPQ). A helical membrane pass occupies residues 1093-1113 (IIPLVLLGLILGLPAILVVVT). The Extracellular portion of the chain corresponds to 1114–1116 (AHS). The chain crosses the membrane as a helical span at residues 1117-1137 (WSYIIWMFIYLLSLPVWNFVL). Residues 1138–1235 (PTYAFWKFDD…RHFDDYFSDA (98 aa)) are Cytoplasmic-facing. A disordered region spans residues 1201-1235 (RDNVISGVGGSNGWGSSQPRGHEQGRHFDDYFSDA). Over residues 1220–1235 (RGHEQGRHFDDYFSDA) the composition is skewed to basic and acidic residues.

It belongs to the chitin synthase family. Class IV subfamily.

It localises to the cell membrane. The catalysed reaction is [(1-&gt;4)-N-acetyl-beta-D-glucosaminyl](n) + UDP-N-acetyl-alpha-D-glucosamine = [(1-&gt;4)-N-acetyl-beta-D-glucosaminyl](n+1) + UDP + H(+). Polymerizes chitin, a structural polymer of the cell wall and septum, by transferring the sugar moiety of UDP-GlcNAc to the non-reducing end of the growing chitin polymer. In Neurospora crassa (strain ATCC 24698 / 74-OR23-1A / CBS 708.71 / DSM 1257 / FGSC 987), this protein is Chitin synthase 4 (chs-4).